Reading from the N-terminus, the 447-residue chain is C4-dicarboxylate transport protein (447 aa).

9 helical membrane passes run 13-33, 49-69, 81-101, 149-169, 189-209, 227-247, 302-322, 336-356, and 357-377; these read SLYFQVITAIVIGVLLGHYWP, LIKMIIAPIIFCTVVVGIAGM, LALLYFEVVSTLALLLGLLIV, AFAKGEMLQVLLFSVMFGFAL, VLFAIVGFIMKVAPIGAFGAM, LMGTFYATCLVFIFGVLGLIA, GYSFNLDGTSIYLTMAAVFIA, TLLAVLLLTSKGAAGVTGSGF, and IVLAATLSAVGGVPVAGLALI. A disordered region spans residues 422 to 447; the sequence is ETEAEANEPEAVLDEIDQHMPVPAAR. Over residues 425-436 the composition is skewed to acidic residues; the sequence is AEANEPEAVLDE.

Belongs to the dicarboxylate/amino acid:cation symporter (DAACS) (TC 2.A.23) family.

It localises to the cell inner membrane. Its function is as follows. Responsible for the transport of dicarboxylates such as succinate, fumarate, and malate from the periplasm across the membrane. In Leptothrix cholodnii (strain ATCC 51168 / LMG 8142 / SP-6) (Leptothrix discophora (strain SP-6)), this protein is C4-dicarboxylate transport protein.